The primary structure comprises 122 residues: Large ribosomal subunit protein bL12 (122 aa).

The protein belongs to the bacterial ribosomal protein bL12 family. In terms of assembly, homodimer. Part of the ribosomal stalk of the 50S ribosomal subunit. Forms a multimeric L10(L12)X complex, where L10 forms an elongated spine to which 2 to 4 L12 dimers bind in a sequential fashion. Binds GTP-bound translation factors.

Its function is as follows. Forms part of the ribosomal stalk which helps the ribosome interact with GTP-bound translation factors. Is thus essential for accurate translation. This is Large ribosomal subunit protein bL12 from Blochmanniella pennsylvanica (strain BPEN).